The primary structure comprises 479 residues: Glycerol-3-phosphate acyltransferase RAM2 (479 aa).

Transmembrane regions (helical) follow at residues 14–34 (YFAL…LVLA), 37–57 (LAGL…LIFA), 215–235 (SPLM…LACL), and 237–257 (IAAG…ALGV). The short motif at 284–289 (HRTLLD) is the HXXXXD motif element. Residue asparagine 448 is glycosylated (N-linked (GlcNAc...) asparagine).

It belongs to the GPAT/DAPAT family.

The protein localises to the membrane. The enzyme catalyses sn-glycerol 3-phosphate + an acyl-CoA = a 1-acyl-sn-glycero-3-phosphate + CoA. The protein operates within lipid metabolism; glycerolipid metabolism. Its function is as follows. Involved in the production of cutin monomers. Esterifies acyl-group from acyl-ACP to the sn-2 position of glycerol-3-phosphate, a step in cutin biosynthesis. Required for colonization of the root by mycorrhizal fungi, and appropriate hyphopodia and arbuscule formation. Cutin monomers act as plant signals that promote colonization by arbuscular mycorrhizal fungi. This signaling function has been recruited by pathogenic oomycetes to facilitate appressoria formation and their own invasion. The sequence is that of Glycerol-3-phosphate acyltransferase RAM2 from Petunia hybrida (Petunia).